A 563-amino-acid polypeptide reads, in one-letter code: Tripeptidyl-peptidase 1 (563 aa).

A signal peptide spans 1-19; sequence MGLQARFLGLLALVIAGKC. The propeptide at 20 to 195 is removed in mature form; it reads THSPEPDQRW…PEPQGVGPVG (176 aa). Cysteines 111 and 122 form a disulfide. The Peptidase S53 domain occupies 199 to 563; the sequence is GVTPSVLRQR…PALLKTLLNP (365 aa). N-linked (GlcNAc...) asparagine glycans are attached at residues Asn210 and Asn222. Residues Glu272 and Asp276 each act as charge relay system in the active site. N-linked (GlcNAc...) asparagine glycans are attached at residues Asn286, Asn313, and Asn443. 2 disulfide bridges follow: Cys365/Cys526 and Cys522/Cys537. The Charge relay system role is filled by Ser475. Ca(2+) contacts are provided by Asp517 and Val518. Gly539, Gly541, and Asp543 together coordinate Ca(2+).

Monomer. Interacts with CLN5. Interacts with CLN3. The cofactor is Ca(2+). Activated by autocatalytic proteolytical processing upon acidification. N-glycosylation is required for processing and activity.

Its subcellular location is the lysosome. The protein localises to the melanosome. The enzyme catalyses Release of an N-terminal tripeptide from a polypeptide, but also has endopeptidase activity.. Its function is as follows. Lysosomal serine protease with tripeptidyl-peptidase I activity. May act as a non-specific lysosomal peptidase which generates tripeptides from the breakdown products produced by lysosomal proteinases. Requires substrates with an unsubstituted N-terminus. The polypeptide is Tripeptidyl-peptidase 1 (Tpp1) (Rattus norvegicus (Rat)).